We begin with the raw amino-acid sequence, 127 residues long: Protein ApaG (127 aa).

The 125-residue stretch at 3–127 (DDPRYRVEVE…FVLSVPRTLH (125 aa)) folds into the ApaG domain.

This Xanthomonas oryzae pv. oryzae (strain MAFF 311018) protein is Protein ApaG.